The sequence spans 1256 residues: Octopamine receptor beta-3R (1256 aa).

Over 1–143 the chain is Extracellular; the sequence is MSGVNVADLL…LDLSLLLLKG (143 aa). Residues asparagine 36, asparagine 113, and asparagine 117 are each glycosylated (N-linked (GlcNAc...) asparagine). Residues 144–164 traverse the membrane as a helical segment; that stretch reads FIFSSIILAAVLGNALVIISV. At 165 to 171 the chain is on the cytoplasmic side; the sequence is QRNRKLR. A helical membrane pass occupies residues 172 to 192; sequence VITNYFVVSLAMADMLVALCA. Residues 193–213 lie on the Extracellular side of the membrane; sequence MTFNASVELSGGKWMFGPFMC. The N-linked (GlcNAc...) asparagine glycan is linked to asparagine 196. The chain crosses the membrane as a helical span at residues 214–236; it reads NVYNSLDVYFSTASILHLCCISV. At 237–258 the chain is on the cytoplasmic side; the sequence is DRYYAIVRPLEYPLNMTHKTVC. Residues 259–279 form a helical membrane-spanning segment; the sequence is FMLANVWILPALISFTPIFLG. Residues 280 to 305 are Extracellular-facing; sequence WYTTEEHLREISLHPDQCSFVVNKAY. The helical transmembrane segment at 306–326 threads the bilayer; it reads ALISSSVSFWIPGIVMLVMYW. The Cytoplasmic portion of the chain corresponds to 327–1169; it reads RIFKEAIRQR…WKAEHKAART (843 aa). Disordered regions lie at residues 377-427, 480-512, 665-698, 751-774, and 1087-1117; these read AREE…DLRD, ELDK…ESTA, LSHS…NKPD, GESP…EPSG, and DTTV…SSTR. A compositionally biased stretch (acidic residues) spans 396 to 406; it reads TDEDDDRDECD. The span at 489–498 shows a compositional bias: polar residues; that stretch reads NGPQQQLSLT. Residues 757–770 are compositionally biased toward pro residues; the sequence is PATPPPSLSPPELP. The helical transmembrane segment at 1170 to 1190 threads the bilayer; it reads LGIIMGVFLLCWLPFFLWYVI. Residues 1191 to 1202 lie on the Extracellular side of the membrane; sequence TSLCGPACPCPD. The chain crosses the membrane as a helical span at residues 1203–1223; sequence VLVVVLFWIGYFNSTLNPLIY. Topologically, residues 1224 to 1256 are cytoplasmic; sequence AYFNRDFREAFRNTLECVLPCLEKRNPYNAYYV.

The protein belongs to the G-protein coupled receptor 1 family. As to expression, in the adult, expressed in the inferior and superior protocerebrum, the posterior lateral protocerebrum, the deutocerebrum, the surface of the subesophageal ganglion, the lateral cell body region, the cortical layer of the ventral nerve cord and the optic lobe medulla of the central nervous system (CNS). Also expressed in the nurse cells and follicle cells of the egg chambers in the ovary at oogenic stages 1-10, and spermatogonia and spermatocytes in the testis. Expressed ubiquitously in the embryonic CNS. In larvae, expressed in the ventral cortical layer of the ventral nerve cord, the cortical layer of the brain lobes, salivary glands, midgut, imaginal disks and developing reproductive organs. Expressed in the larval prothoracic gland with weak expression in other regions of the ring gland.

It is found in the cell membrane. Autoreceptor for octopamine, which is a neurotransmitter, neurohormone, and neuromodulator in invertebrates. Probably also acts as a receptor for tyramine during ecdysone biosynthesis. Required for the biosynthesis of the steroid hormone ecdysone which is necessary for metamorphosis. Involved in activation of prothoracicotropic hormone and insulin-like peptide signaling which is required for the expression of ecdysone biosynthetic genes. The chain is Octopamine receptor beta-3R from Drosophila melanogaster (Fruit fly).